The following is a 488-amino-acid chain: Protein nucleotidyltransferase YdiU (488 aa).

ATP-binding residues include Gly-91, Gly-93, Arg-94, Lys-114, Asp-126, Gly-127, Arg-177, and Arg-184. Residue Asp-253 is the Proton acceptor of the active site. Mg(2+) is bound by residues Asn-254 and Asp-263. Residue Asp-263 coordinates ATP.

It belongs to the SELO family. Mg(2+) is required as a cofactor. The cofactor is Mn(2+).

It carries out the reaction L-seryl-[protein] + ATP = 3-O-(5'-adenylyl)-L-seryl-[protein] + diphosphate. The enzyme catalyses L-threonyl-[protein] + ATP = 3-O-(5'-adenylyl)-L-threonyl-[protein] + diphosphate. It catalyses the reaction L-tyrosyl-[protein] + ATP = O-(5'-adenylyl)-L-tyrosyl-[protein] + diphosphate. The catalysed reaction is L-histidyl-[protein] + UTP = N(tele)-(5'-uridylyl)-L-histidyl-[protein] + diphosphate. It carries out the reaction L-seryl-[protein] + UTP = O-(5'-uridylyl)-L-seryl-[protein] + diphosphate. The enzyme catalyses L-tyrosyl-[protein] + UTP = O-(5'-uridylyl)-L-tyrosyl-[protein] + diphosphate. In terms of biological role, nucleotidyltransferase involved in the post-translational modification of proteins. It can catalyze the addition of adenosine monophosphate (AMP) or uridine monophosphate (UMP) to a protein, resulting in modifications known as AMPylation and UMPylation. This is Protein nucleotidyltransferase YdiU from Bacillus cereus (strain G9842).